Here is an 819-residue protein sequence, read N- to C-terminus: Putative U-box domain-containing protein 53 (819 aa).

Disordered regions lie at residues 208–309 (TSDT…NPQF) and 398–433 (KETEKFEQKRREEREAAQRREAEMKATHEAKEKEKL). Over residues 223 to 237 (ERTSSSCSSGSGANS) the composition is skewed to low complexity. Positions 238–260 (DVMSNALKSNPHTLSNKRMQNLP) are enriched in polar residues. Residues 278–296 (DETKKRSSDAAEEASKRSS) are compositionally biased toward basic and acidic residues. The span at 297–307 (PETSRSVSWNP) shows a compositional bias: polar residues. The stretch at 395–437 (IAKKETEKFEQKRREEREAAQRREAEMKATHEAKEKEKLEESS) forms a coiled coil. A Protein kinase domain is found at 460–728 (FSEDLKIGMG…DLEDQILPVL (269 aa)). ATP is bound by residues 466–474 (IGMGAYGDV) and Lys-487. Asp-582 (proton acceptor) is an active-site residue. Residues 748–819 (QPPSHFFCPL…AIVEWRNRNQ (72 aa)) form the U-box domain.

The protein belongs to the protein kinase superfamily. Ser/Thr protein kinase family.

It catalyses the reaction L-seryl-[protein] + ATP = O-phospho-L-seryl-[protein] + ADP + H(+). The catalysed reaction is L-threonyl-[protein] + ATP = O-phospho-L-threonyl-[protein] + ADP + H(+). It carries out the reaction S-ubiquitinyl-[E2 ubiquitin-conjugating enzyme]-L-cysteine + [acceptor protein]-L-lysine = [E2 ubiquitin-conjugating enzyme]-L-cysteine + N(6)-ubiquitinyl-[acceptor protein]-L-lysine.. It functions in the pathway protein modification; protein ubiquitination. Functionally, functions as an E3 ubiquitin ligase. This Arabidopsis thaliana (Mouse-ear cress) protein is Putative U-box domain-containing protein 53 (PUB53).